Reading from the N-terminus, the 208-residue chain is V-type ATP synthase subunit E (208 aa).

This sequence belongs to the V-ATPase E subunit family.

In terms of biological role, produces ATP from ADP in the presence of a proton gradient across the membrane. In Chlamydia trachomatis serovar A (strain ATCC VR-571B / DSM 19440 / HAR-13), this protein is V-type ATP synthase subunit E.